A 147-amino-acid chain; its full sequence is 3-dehydroquinate dehydratase (147 aa).

Tyr-23 (proton acceptor) is an active-site residue. Residues Asn-74, His-80, and Asp-87 each contribute to the substrate site. His-100 acts as the Proton donor in catalysis. Substrate is bound by residues 101 to 102 (IS) and Arg-111.

This sequence belongs to the type-II 3-dehydroquinase family. As to quaternary structure, homododecamer.

The enzyme catalyses 3-dehydroquinate = 3-dehydroshikimate + H2O. Its pathway is metabolic intermediate biosynthesis; chorismate biosynthesis; chorismate from D-erythrose 4-phosphate and phosphoenolpyruvate: step 3/7. Its function is as follows. Catalyzes a trans-dehydration via an enolate intermediate. This is 3-dehydroquinate dehydratase from Bacillus pumilus (strain SAFR-032).